The chain runs to 322 residues: Quinolinate synthase (322 aa).

Iminosuccinate-binding residues include His37 and Ser54. [4Fe-4S] cluster is bound at residue Cys99. Iminosuccinate is bound by residues 125-127 (YIN) and Ser142. Cys185 lines the [4Fe-4S] cluster pocket. Residues 211 to 213 (HPE) and Thr228 contribute to the iminosuccinate site. Cys278 serves as a coordination point for [4Fe-4S] cluster.

Belongs to the quinolinate synthase family. Type 2 subfamily. [4Fe-4S] cluster is required as a cofactor.

It localises to the cytoplasm. It carries out the reaction iminosuccinate + dihydroxyacetone phosphate = quinolinate + phosphate + 2 H2O + H(+). The protein operates within cofactor biosynthesis; NAD(+) biosynthesis; quinolinate from iminoaspartate: step 1/1. Catalyzes the condensation of iminoaspartate with dihydroxyacetone phosphate to form quinolinate. This is Quinolinate synthase from Chlorobaculum parvum (strain DSM 263 / NCIMB 8327) (Chlorobium vibrioforme subsp. thiosulfatophilum).